The chain runs to 261 residues: Ribosomal RNA small subunit methyltransferase A (261 aa).

The S-adenosyl-L-methionine site is built by His13, Leu15, Gly40, Glu61, Asp85, and Asn105.

It belongs to the class I-like SAM-binding methyltransferase superfamily. rRNA adenine N(6)-methyltransferase family. RsmA subfamily.

The protein localises to the cytoplasm. The catalysed reaction is adenosine(1518)/adenosine(1519) in 16S rRNA + 4 S-adenosyl-L-methionine = N(6)-dimethyladenosine(1518)/N(6)-dimethyladenosine(1519) in 16S rRNA + 4 S-adenosyl-L-homocysteine + 4 H(+). In terms of biological role, specifically dimethylates two adjacent adenosines (A1518 and A1519) in the loop of a conserved hairpin near the 3'-end of 16S rRNA in the 30S particle. May play a critical role in biogenesis of 30S subunits. The protein is Ribosomal RNA small subunit methyltransferase A of Flavobacterium johnsoniae (strain ATCC 17061 / DSM 2064 / JCM 8514 / BCRC 14874 / CCUG 350202 / NBRC 14942 / NCIMB 11054 / UW101) (Cytophaga johnsonae).